Here is a 157-residue protein sequence, read N- to C-terminus: Ribosomal RNA large subunit methyltransferase H (157 aa).

Residues Leu73, Gly105, and 124–129 each bind S-adenosyl-L-methionine; that span reads LSKMTF.

It belongs to the RNA methyltransferase RlmH family. Homodimer.

Its subcellular location is the cytoplasm. The catalysed reaction is pseudouridine(1915) in 23S rRNA + S-adenosyl-L-methionine = N(3)-methylpseudouridine(1915) in 23S rRNA + S-adenosyl-L-homocysteine + H(+). In terms of biological role, specifically methylates the pseudouridine at position 1915 (m3Psi1915) in 23S rRNA. In Christiangramia forsetii (strain DSM 17595 / CGMCC 1.15422 / KT0803) (Gramella forsetii), this protein is Ribosomal RNA large subunit methyltransferase H.